We begin with the raw amino-acid sequence, 259 residues long: Thiazole synthase (259 aa).

Residue K95 is the Schiff-base intermediate with DXP of the active site. 1-deoxy-D-xylulose 5-phosphate contacts are provided by residues G156, 182–183, and 204–205; these read AG and AS.

Belongs to the ThiG family. In terms of assembly, homotetramer. Forms heterodimers with either ThiH or ThiS.

The protein localises to the cytoplasm. It carries out the reaction [ThiS sulfur-carrier protein]-C-terminal-Gly-aminoethanethioate + 2-iminoacetate + 1-deoxy-D-xylulose 5-phosphate = [ThiS sulfur-carrier protein]-C-terminal Gly-Gly + 2-[(2R,5Z)-2-carboxy-4-methylthiazol-5(2H)-ylidene]ethyl phosphate + 2 H2O + H(+). Its pathway is cofactor biosynthesis; thiamine diphosphate biosynthesis. Catalyzes the rearrangement of 1-deoxy-D-xylulose 5-phosphate (DXP) to produce the thiazole phosphate moiety of thiamine. Sulfur is provided by the thiocarboxylate moiety of the carrier protein ThiS. In vitro, sulfur can be provided by H(2)S. In Corynebacterium aurimucosum (strain ATCC 700975 / DSM 44827 / CIP 107346 / CN-1) (Corynebacterium nigricans), this protein is Thiazole synthase.